A 98-amino-acid polypeptide reads, in one-letter code: Protein translation factor SUI1 homolog (98 aa).

This sequence belongs to the SUI1 family.

The protein is Protein translation factor SUI1 homolog of Pyrococcus abyssi (strain GE5 / Orsay).